A 146-amino-acid chain; its full sequence is MRLHELHPAPGSRPRATRVGRGIGSGLGKTSGRGHKGQKARSGGGVRRGFEGGQMPLTRRLPKRGFTNIFARKLVPINVGELERFEPETVVTPELLHDAGLVKQARDGVKILGDGELTKKLTVKVQAASRKAIEKIEAAGGKVEVM.

Residues 1-58 (MRLHELHPAPGSRPRATRVGRGIGSGLGKTSGRGHKGQKARSGGGVRRGFEGGQMPLT) form a disordered region. Residues 21–31 (RGIGSGLGKTS) are compositionally biased toward gly residues.

Belongs to the universal ribosomal protein uL15 family. As to quaternary structure, part of the 50S ribosomal subunit.

In terms of biological role, binds to the 23S rRNA. This is Large ribosomal subunit protein uL15 from Moorella thermoacetica (strain ATCC 39073 / JCM 9320).